The chain runs to 90 residues: Small ribosomal subunit protein bS18B (90 aa).

This sequence belongs to the bacterial ribosomal protein bS18 family. Part of the 30S ribosomal subunit. Forms a tight heterodimer with protein bS6.

Functionally, binds as a heterodimer with protein bS6 to the central domain of the 16S rRNA, where it helps stabilize the platform of the 30S subunit. The polypeptide is Small ribosomal subunit protein bS18B (Roseiflexus sp. (strain RS-1)).